The sequence spans 491 residues: MSLLMISENVKLAREYALLGNYDSAMVYYQGVLDQMNKYLYSVKDTYLQQKWQQVWQEINVEAKHVKDIMKTLESFKLDSTPLKAAQHDLPASEGEVWSMPVPVERRPSPGPRKRQSSQYSDSKSHGNRPGTTVRVHRSSAQNLHNDRGKAVRCREKKEQNKGREEKNKSPAAVTEPETNKFDSTGYDKDLVEALERDIISQNPNVRWDDIADLVEAKKLLKEAVVLPMWMPEFFKGIRRPWKGVLMVGPPGTGKTLLAKAVATECKTTFFNVSSSTLTSKYRGESEKLVRLLFEMARFYSPATIFIDEIDSICSRRGTSEEHEASRRVKAELLVQMDGVGGASENDDPSKMVMVLAATNFPWDIDEALRRRLEKRIYIPLPSAKGREELLRISLRELELADDVDLASIAENMEGYSGADITNVCRDASLMAMRRRIEGLTPEEIRNLSKEEMHMPTTMEDFEMALKKVSKSVSAADIERYEKWIFEFGSC.

Residues 1–29 form an interaction with KATNB1 region; sequence MSLLMISENVKLAREYALLGNYDSAMVYY. The segment at 1–75 is interaction with dynein and NDEL1; sequence MSLLMISENV…VKDIMKTLES (75 aa). An interaction with microtubules region spans residues 1-185; sequence MSLLMISENV…EPETNKFDST (185 aa). Phosphoserine; by DYRK2 is present on residues Ser-42 and Ser-109. A disordered region spans residues 87-185; it reads QHDLPASEGE…EPETNKFDST (99 aa). Thr-133 carries the post-translational modification Phosphothreonine; by DYRK2. The span at 145-169 shows a compositional bias: basic and acidic residues; it reads HNDRGKAVRCREKKEQNKGREEKNK. Ser-170 is modified (phosphoserine). 249-256 contributes to the ATP binding site; that stretch reads GPPGTGKT.

This sequence belongs to the AAA ATPase family. Katanin p60 subunit A1 subfamily. Can homooligomerize into hexameric rings, which may be promoted by interaction with microtubules. Interacts with KATNB1, which may serve as a targeting subunit. Interacts with ASPM; the katanin complex formation KATNA1:KATNB1 is required for the association of ASPM Interacts with dynein and NDEL1. Associates with the E3 ligase complex containing DYRK2, EDD/UBR5, DDB1 and DCAF1 proteins (EDVP complex). Interacts with KLHL42 (via the kelch domains). Interacts with CUL3; the interaction is enhanced by KLHL42. Interacts with KATNB1 and KATNBL1. Interacts with CAMSAP2 and CAMSAP3; leading to regulate the length of CAMSAP-decorated microtubule stretches. Post-translationally, phosphorylation by DYRK2 triggers ubiquitination and subsequent degradation. Ubiquitinated by the BCR(KLHL42) E3 ubiquitin ligase complex, leading to its proteasomal degradation. Ubiquitinated by the EDVP E3 ligase complex and subsequently targeted for proteasomal degradation.

Its subcellular location is the cytoplasm. It is found in the midbody. The protein localises to the cytoskeleton. The protein resides in the microtubule organizing center. It localises to the centrosome. Its subcellular location is the spindle pole. It is found in the spindle. It carries out the reaction n ATP + n H2O + a microtubule = n ADP + n phosphate + (n+1) alpha/beta tubulin heterodimers.. ATPase activity is stimulated by microtubules, which promote homooligomerization. ATP-dependent microtubule severing is stimulated by interaction with KATNB1. Functionally, catalytic subunit of a complex which severs microtubules in an ATP-dependent manner. Microtubule severing may promote rapid reorganization of cellular microtubule arrays and the release of microtubules from the centrosome following nucleation. Microtubule release from the mitotic spindle poles may allow depolymerization of the microtubule end proximal to the spindle pole, leading to poleward microtubule flux and poleward motion of chromosome. Microtubule release within the cell body of neurons may be required for their transport into neuronal processes by microtubule-dependent motor proteins. This transport is required for axonal growth. This is Katanin p60 ATPase-containing subunit A1 from Macaca fascicularis (Crab-eating macaque).